Here is a 295-residue protein sequence, read N- to C-terminus: Ribosomal protein L11 methyltransferase (295 aa).

Positions 139, 166, 188, and 231 each coordinate S-adenosyl-L-methionine.

This sequence belongs to the methyltransferase superfamily. PrmA family.

The protein localises to the cytoplasm. The enzyme catalyses L-lysyl-[protein] + 3 S-adenosyl-L-methionine = N(6),N(6),N(6)-trimethyl-L-lysyl-[protein] + 3 S-adenosyl-L-homocysteine + 3 H(+). Functionally, methylates ribosomal protein L11. The sequence is that of Ribosomal protein L11 methyltransferase from Cyanothece sp. (strain PCC 7425 / ATCC 29141).